We begin with the raw amino-acid sequence, 20 residues long: Phosphoglycerate kinase (20 aa).

Residues 1-20 (MNKKSIRNVNLKGKRVFDRV) are disordered.

It belongs to the phosphoglycerate kinase family. As to quaternary structure, monomer.

It is found in the cytoplasm. It carries out the reaction (2R)-3-phosphoglycerate + ATP = (2R)-3-phospho-glyceroyl phosphate + ADP. It functions in the pathway carbohydrate degradation; glycolysis; pyruvate from D-glyceraldehyde 3-phosphate: step 2/5. The chain is Phosphoglycerate kinase from Bacillus cereus.